A 516-amino-acid chain; its full sequence is Nucleolar complex protein 4 homolog (516 aa).

The next 3 helical transmembrane spans lie at 297–317, 347–367, and 375–395; these read ACDLGGALSLLALNGLFILIH, FFHLADLFLSSSHLPAYLVAA, and LALTAPPEALLMVLPFICNLL.

The protein belongs to the CBF/MAK21 family.

Its subcellular location is the nucleus membrane. The protein localises to the nucleus. The protein resides in the nucleolus. The chain is Nucleolar complex protein 4 homolog (NOC4L) from Homo sapiens (Human).